The following is a 495-amino-acid chain: UDP-N-acetylmuramoyl-L-alanyl-D-glutamate--2,6-diaminopimelate ligase (495 aa).

Serine 29 is a UDP-N-acetyl-alpha-D-muramoyl-L-alanyl-D-glutamate binding site. Residue 111–117 (GTNGKTS) coordinates ATP. UDP-N-acetyl-alpha-D-muramoyl-L-alanyl-D-glutamate contacts are provided by residues 153–154 (TT), serine 180, glutamine 186, and arginine 188. At lysine 220 the chain carries N6-carboxylysine. Meso-2,6-diaminopimelate contacts are provided by residues arginine 384, 408–411 (DNPR), glycine 459, and glutamate 463. The short motif at 408 to 411 (DNPR) is the Meso-diaminopimelate recognition motif element.

The protein belongs to the MurCDEF family. MurE subfamily. The cofactor is Mg(2+). Carboxylation is probably crucial for Mg(2+) binding and, consequently, for the gamma-phosphate positioning of ATP.

The protein localises to the cytoplasm. The enzyme catalyses UDP-N-acetyl-alpha-D-muramoyl-L-alanyl-D-glutamate + meso-2,6-diaminopimelate + ATP = UDP-N-acetyl-alpha-D-muramoyl-L-alanyl-gamma-D-glutamyl-meso-2,6-diaminopimelate + ADP + phosphate + H(+). The protein operates within cell wall biogenesis; peptidoglycan biosynthesis. Functionally, catalyzes the addition of meso-diaminopimelic acid to the nucleotide precursor UDP-N-acetylmuramoyl-L-alanyl-D-glutamate (UMAG) in the biosynthesis of bacterial cell-wall peptidoglycan. In Xanthomonas campestris pv. campestris (strain 8004), this protein is UDP-N-acetylmuramoyl-L-alanyl-D-glutamate--2,6-diaminopimelate ligase.